A 342-amino-acid chain; its full sequence is Methyltransferase ungE' (342 aa).

The protein belongs to the methyltransferase superfamily.

Its pathway is secondary metabolite biosynthesis. In terms of biological role, methyltransferase; part of the gene cluster that mediates the biosynthesis of the unguisins, gamma-aminobutyric acid (GABA)-containing fungal cyclic heptapeptides with the amino acid sequence cyclo-(D-Ala1-D-Val2-L-Leu3-beta-MePhe4-D-Ala5-D-Trp6-GABA7) for unguisin H and cyclo-(D-Ala1-D-Ala2-L-Leu3-beta-MePhe4-D-Ala5-D-Trp6-GABA7) for unguisin I. Within the pathway, the methyltransferase ungE' is probably involved in the synthesis of the (2R,3R)-beta-methylphenylalanine residue incorporated by the module 4 of the nonribosomal peptide synthetase (NRPS) ungA'. The alanine racemase ungC' catalyzes the interconversion of L-alanine and D-alanine, providing the D-alanine which is accepted by the first adenylation domain of ungA'. UngA' is the main enzyme within the cluster which condenses the 7 residues using its respective 7 modules. The terminal condensation domain (Ct) is involved in cyclization with D-alanine and thereby releasing of unguisins H and I. Finally, the hydrolase ungD' catalyzes the hydrolysis between the D-tryptophan and GABA residues of unguisins H and I to produce the corresponding linear peptides. The polypeptide is Methyltransferase ungE' (Aspergillus campestris (strain IBT 28561)).